Here is a 133-residue protein sequence, read N- to C-terminus: Basic leucine zipper transcriptional factor ATF-like 3 (133 aa).

A disordered region spans residues 1–68; the sequence is MSQGPPAGGV…EHESLEQENS (68 aa). Phosphoserine occurs at positions 2 and 24. Polar residues predominate over residues 11–24; it reads LQSSVAAPGNQPQS. Positions 28–91 constitute a bZIP domain; sequence DDRKVRRREK…RHLTEALKEH (64 aa). Residues 30 to 55 are basic motif; sequence RKVRRREKNRVAAQRSRKKQTQKSDK. Residues 51 to 68 are compositionally biased toward basic and acidic residues; sequence QKSDKLHEEHESLEQENS. A leucine-zipper region spans residues 56–84; sequence LHEEHESLEQENSVLRREIAKLKEELRHL.

The protein belongs to the bZIP family. As to quaternary structure, heterodimer; heterodimerizes with JUN family proteins. Interacts with JUN. Ubiquitously expressed.

The protein resides in the nucleus. Its function is as follows. AP-1 family transcription factor that controls the differentiation of CD8(+) thymic conventional dendritic cells in the immune system. Acts via the formation of a heterodimer with JUN family proteins that recognizes and binds DNA sequence 5'-TGA[CG]TCA-3' and regulates expression of target genes. Required for development of CD8-alpha(+) classical dendritic cells (cDCs) and related CD103(+) dendritic cells that cross-present antigens to CD8 T-cells and produce interleukin-12 (IL12) in response to pathogens. The sequence is that of Basic leucine zipper transcriptional factor ATF-like 3 (Batf3) from Rattus norvegicus (Rat).